The chain runs to 412 residues: Putative competence-damage inducible protein (412 aa).

The protein belongs to the CinA family.

The sequence is that of Putative competence-damage inducible protein from Clostridium perfringens (strain ATCC 13124 / DSM 756 / JCM 1290 / NCIMB 6125 / NCTC 8237 / Type A).